A 226-amino-acid polypeptide reads, in one-letter code: Chalcone--flavanone isomerase (226 aa).

The substrate site is built by threonine 51, asparagine 116, and serine 194.

Belongs to the chalcone isomerase family.

The catalysed reaction is a chalcone = a flavanone.. It participates in secondary metabolite biosynthesis; flavonoid biosynthesis. Catalyzes the intramolecular cyclization of bicyclic chalcones into tricyclic (S)-flavanones. Responsible for the isomerization of 4,2',4',6'-tetrahydroxychalcone (also termed chalcone) into naringenin. This is Chalcone--flavanone isomerase (CHI) from Canna generalis (Canna lily).